A 282-amino-acid chain; its full sequence is Nucleotide-binding protein in ptsN-ptsO intergenic region (282 aa).

8-15 (GRSGSGKS) contacts ATP. Residue 56–59 (DVRN) coordinates GTP.

It belongs to the RapZ-like family.

In terms of biological role, displays ATPase and GTPase activities. This Shewanella violacea protein is Nucleotide-binding protein in ptsN-ptsO intergenic region.